The following is a 287-amino-acid chain: MPFSRLFGKKEKNQMDDIDNIVEEGVQRVQELPMDKIFPNQFQPRTVFDQDKIDELARTIRIHGVIQPIVVREMEPDYYEIIAGERRFRAVLSLEMEKIPAIIQNLDDEEVAAIALIENLQREELTPIEEAKAYRSLLDMQEVTQEALAQRVGKSQSAIANKMRLLKLPETVQEAVLNKQISERHARSLLALETEEQQVALLAEIAENHWNVKQTEARIQEILGVKKPVATKKTKPKRQAISRDVRIAMNTIKQSVTMVKDNGMDLDFTEEETDDFYQITIQIPKKK.

Positions 146 to 165 form a DNA-binding region, H-T-H motif; the sequence is EALAQRVGKSQSAIANKMRL.

This sequence belongs to the ParB family.

It is found in the cytoplasm. The protein localises to the nucleoid. Effects nucleoid occlusion by binding relatively nonspecifically to DNA and preventing the assembly of the division machinery in the vicinity of the nucleoid, especially under conditions that disturb the cell cycle. It helps to coordinate cell division and chromosome segregation by preventing the formation of the Z ring through the nucleoid, which would cause chromosome breakage. This chain is Nucleoid occlusion protein, found in Listeria monocytogenes serotype 4a (strain HCC23).